Here is a 2225-residue protein sequence, read N- to C-terminus: Multifunctional protein CAD (2225 aa).

Alanine 2 is subject to N-acetylalanine. The tract at residues 2-365 is GATase (Glutamine amidotransferase); the sequence is AALVLEDGSV…TVREAAAGNI (364 aa). Residues serine 44, glycine 222, and glycine 224 each coordinate L-glutamine. The Glutamine amidotransferase type-1 domain maps to 177 to 363; the sequence is RICALDCGLK…LETVREAAAG (187 aa). Cysteine 252 (nucleophile; for GATase activity) is an active-site residue. 5 residues coordinate L-glutamine: leucine 253, glutamine 256, asparagine 294, glycine 296, and phenylalanine 297. Residues histidine 336 and glutamate 338 each act as for GATase activity in the active site. Residues 366 to 394 form a linker region; sequence GGQTVRERLAQRLCPPELPIPGSGLPPPR. A CPSase A region spans residues 395-933; it reads KVLILGSGGL…NTHDLDFRAP (539 aa). The CPSase (Carbamoyl-phosphate synthase) stretch occupies residues 395-1455; the sequence is KVLILGSGGL…APPLKVHVDC (1061 aa). Residue threonine 456 is modified to Phosphothreonine; by MAPK1. Positions 515, 555, 561, 562, 592, 599, 625, 626, 627, 668, and 682 each coordinate ATP. One can recognise an ATP-grasp 1 domain in the interval 519–711; it reads AARMAEIGEH…LAYVAAKLAL (193 aa). The Mg(2+) site is built by glutamine 668, glutamate 682, and asparagine 684. Residues glutamine 668, glutamate 682, and asparagine 684 each coordinate Mn(2+). Lysine 747 bears the N6-acetyllysine mark. Residues 934 to 1455 form a CPSase B region; the sequence is HVLVLGSGVY…APPLKVHVDC (522 aa). Serine 1038 carries the phosphoserine modification. An ATP-grasp 2 domain is found at 1052-1243; the sequence is SRLLDTIGIS…LVALATRIIM (192 aa). The ATP site is built by arginine 1088, lysine 1127, isoleucine 1129, glutamate 1134, glycine 1159, valine 1160, histidine 1161, serine 1162, glutamine 1202, and glutamate 1214. The Mg(2+) site is built by glutamine 1202, glutamate 1214, and asparagine 1216. Positions 1202, 1214, and 1216 each coordinate Mn(2+). In terms of domain architecture, MGS-like spans 1308-1462; the sequence is FKIPEKNILL…VDCMTSQKLV (155 aa). Serine 1406 is modified (phosphoserine; by PKA). An N6-acetyllysine modification is found at lysine 1411. Positions 1456-1788 are DHOase (dihydroorotase); it reads MTSQKLVRLP…VKGTVRRVVL (333 aa). Residues histidine 1471 and histidine 1473 each coordinate Zn(2+). Residues arginine 1475 and asparagine 1505 each coordinate (S)-dihydroorotate. 5 residues coordinate Zn(2+): lysine 1556, histidine 1590, cysteine 1613, histidine 1614, and glutamate 1637. Position 1556 is an N6-carboxylysine (lysine 1556). Arginine 1661 is a (S)-dihydroorotate binding site. Aspartate 1686 contacts Zn(2+). Aspartate 1686 functions as the For DHOase activity in the catalytic mechanism. Histidine 1690 and proline 1702 together coordinate (S)-dihydroorotate. The tract at residues 1789 to 1917 is linker; sequence RGEVAYIDGQ…GLLHPQMSPL (129 aa). A disordered region spans residues 1815–1885; the sequence is GVVPQPPPST…VVEPELMGTP (71 aa). A compositionally biased stretch (low complexity) spans 1825–1834; sequence PATTEITTTP. Serine 1859 bears the Phosphoserine mark. Basic and acidic residues predominate over residues 1866-1878; sequence EEPKEKPPRKVVE. Position 1884 is a phosphothreonine (threonine 1884). Phosphoserine occurs at positions 1900 and 1938. The ATCase (Aspartate transcarbamylase) stretch occupies residues 1918 to 2225; sequence LHSLVGQHIL…ALLATVLGRF (308 aa). Carbamoyl phosphate is bound by residues arginine 1975 and threonine 1976. Lysine 2003 is a binding site for L-aspartate. The carbamoyl phosphate site is built by arginine 2024, histidine 2052, and glutamine 2055. Positions 2085 and 2146 each coordinate L-aspartate. Carbamoyl phosphate contacts are provided by methionine 2185 and proline 2186.

It in the N-terminal section; belongs to the CarA family. In the 2nd section; belongs to the CarB family. This sequence in the 3rd section; belongs to the metallo-dependent hydrolases superfamily. DHOase family. CAD subfamily. The protein in the C-terminal section; belongs to the aspartate/ornithine carbamoyltransferase superfamily. ATCase family. Homohexamer. Interacts with CIPC. It depends on Zn(2+) as a cofactor. Requires Mg(2+) as cofactor. Mn(2+) serves as cofactor. In terms of processing, activated by MAP kinase (Erk1/2) phosphorylation just prior to the S phase of the cell cycle, when the demand for pyrimidine nucleotides is greatest, and down-regulated as the cells emerge from S phase by protein kinase A (PKA) phosphorylation. Phosphorylation at Ser-1859 by RPS6KB1 downstream of MTOR promotes oligomerization and stimulates dihydroorotase activity. Phosphorylation at Ser-1406 reduces sensitivity to feedback inhibition by UTP.

The protein resides in the cytoplasm. The protein localises to the nucleus. The catalysed reaction is hydrogencarbonate + L-glutamine + 2 ATP + H2O = carbamoyl phosphate + L-glutamate + 2 ADP + phosphate + 2 H(+). It carries out the reaction L-glutamine + H2O = L-glutamate + NH4(+). The enzyme catalyses hydrogencarbonate + NH4(+) + 2 ATP = carbamoyl phosphate + 2 ADP + phosphate + 2 H(+). It catalyses the reaction carbamoyl phosphate + L-aspartate = N-carbamoyl-L-aspartate + phosphate + H(+). The catalysed reaction is (S)-dihydroorotate + H2O = N-carbamoyl-L-aspartate + H(+). It participates in pyrimidine metabolism; UMP biosynthesis via de novo pathway; (S)-dihydroorotate from bicarbonate: step 1/3. The protein operates within pyrimidine metabolism; UMP biosynthesis via de novo pathway; (S)-dihydroorotate from bicarbonate: step 2/3. It functions in the pathway pyrimidine metabolism; UMP biosynthesis via de novo pathway; (S)-dihydroorotate from bicarbonate: step 3/3. Its activity is regulated as follows. Allosterically regulated and controlled by phosphorylation. 5-phosphoribose 1-diphosphate (PRPP) is an activator while UMP and UTP are inhibitors of the CPSase reaction. Multifunctional protein that encodes the first 3 enzymatic activities of the de novo pyrimidine pathway: carbamoylphosphate synthetase (CPSase; EC 6.3.5.5), aspartate transcarbamylase (ATCase; EC 2.1.3.2) and dihydroorotase (DHOase; EC 3.5.2.3). The CPSase-function is accomplished in 2 steps, by a glutamine-dependent amidotransferase activity (GATase) that binds and cleaves glutamine to produce ammonia, followed by an ammonium-dependent carbamoyl phosphate synthetase, which reacts with the ammonia, hydrogencarbonate and ATP to form carbamoyl phosphate. The endogenously produced carbamoyl phosphate is sequestered and channeled to the ATCase active site. ATCase then catalyzes the formation of carbamoyl-L-aspartate from L-aspartate and carbamoyl phosphate. In the last step, DHOase catalyzes the cyclization of carbamoyl aspartate to dihydroorotate. The sequence is that of Multifunctional protein CAD (Cad) from Mus musculus (Mouse).